The following is a 144-amino-acid chain: Large ribosomal subunit protein uL15 (144 aa).

Residues 1 to 53 form a disordered region; sequence MFLNTIKPGEGAKHAKRRVGRGIGSGLGKTAGRGHKGQKSRSGGFHKVGFEGG. The span at 21–31 shows a compositional bias: gly residues; the sequence is RGIGSGLGKTA.

The protein belongs to the universal ribosomal protein uL15 family. As to quaternary structure, part of the 50S ribosomal subunit.

In terms of biological role, binds to the 23S rRNA. The chain is Large ribosomal subunit protein uL15 from Laribacter hongkongensis (strain HLHK9).